A 296-amino-acid polypeptide reads, in one-letter code: (+)-neomenthol dehydrogenase (296 aa).

16-40 is an NADP(+) binding site; sequence RGIGFEICRQLASEGIRVVLTSRDE. Substrate is bound at residue serine 164. Tyrosine 220 acts as the Proton acceptor in catalysis.

Belongs to the short-chain dehydrogenases/reductases (SDR) family. As to quaternary structure, monomer.

The protein localises to the cytoplasm. The catalysed reaction is (+)-neomenthol + NADP(+) = (1R,4S)-menthone + NADPH + H(+). Functionally, aldehyde reductase that catalyzes the reduction of the aldehyde carbonyl groups on saturated and alpha,beta-unsaturated aldehydes with more than 5 carbons. Involved in basal resistance against pathogens. In Arabidopsis thaliana (Mouse-ear cress), this protein is (+)-neomenthol dehydrogenase (SDR1).